The chain runs to 604 residues: Phosphomethylpyrimidine synthase (604 aa).

Substrate-binding positions include asparagine 218, methionine 247, tyrosine 276, histidine 312, 332–334, 373–376, and glutamate 412; these read SRG and DGLR. Histidine 416 is a Zn(2+) binding site. Tyrosine 439 provides a ligand contact to substrate. Histidine 480 lines the Zn(2+) pocket. Residues cysteine 560, cysteine 563, and cysteine 568 each coordinate [4Fe-4S] cluster.

This sequence belongs to the ThiC family. Homodimer. [4Fe-4S] cluster serves as cofactor.

It carries out the reaction 5-amino-1-(5-phospho-beta-D-ribosyl)imidazole + S-adenosyl-L-methionine = 4-amino-2-methyl-5-(phosphooxymethyl)pyrimidine + CO + 5'-deoxyadenosine + formate + L-methionine + 3 H(+). It participates in cofactor biosynthesis; thiamine diphosphate biosynthesis. Functionally, catalyzes the synthesis of the hydroxymethylpyrimidine phosphate (HMP-P) moiety of thiamine from aminoimidazole ribotide (AIR) in a radical S-adenosyl-L-methionine (SAM)-dependent reaction. The chain is Phosphomethylpyrimidine synthase from Zymomonas mobilis subsp. mobilis (strain ATCC 31821 / ZM4 / CP4).